The following is a 79-amino-acid chain: Small ribosomal subunit protein uS17 (79 aa).

It belongs to the universal ribosomal protein uS17 family. As to quaternary structure, part of the 30S ribosomal subunit.

In terms of biological role, one of the primary rRNA binding proteins, it binds specifically to the 5'-end of 16S ribosomal RNA. In Bartonella tribocorum (strain CIP 105476 / IBS 506), this protein is Small ribosomal subunit protein uS17.